A 423-amino-acid chain; its full sequence is Ankyrin repeat and SAM domain-containing protein 4B (423 aa).

A mediates localization to microvilli region spans residues 1–251; that stretch reads MSTRYHQAAS…PKDFKEKLHF (251 aa). ANK repeat units lie at residues 31–60, 64–93, and 97–126; these read DGMT…DPDK, WGNT…NIFA, and DLKS…VQNT. Residues 130–169 are a coiled coil; sequence KRVTRLKEQALKNARKQMKECERLQERHQNKMARTYSKED. Disordered regions lie at residues 158-181, 207-227, and 303-335; these read QNKM…STLS, KSKK…SGQR, and QRQG…AGDL. A compositionally biased stretch (low complexity) spans 171 to 181; sequence GTISSSHSTLS. Residues 207 to 224 show a composition bias toward basic and acidic residues; it reads KSKKNKDTTEQLEKDGRS. Residues 253 to 352 form a mediates interaction with MYO7B region; sequence VEEDDDVQHE…EWEEDAVDAT (100 aa). A coiled-coil region spans residues 301 to 335; that stretch reads LFQRQGAAGTVEEEEEEEEEEEEEKREANGTAGDL. Positions 311-324 are enriched in acidic residues; it reads VEEEEEEEEEEEEE. The SAM domain maps to 357 to 409; the sequence is FLQSQHLEEFLPIFMREQIDLEALLLCSDEDLQNIHMQLGPRKKVLSAIDKRK. Residues 421–423 carry the PDZ-binding; mediates interaction with USH1C motif; the sequence is TSL.

As to quaternary structure, part of the IMAC/intermicrovillar adhesion complex/intermicrovillar tip-link complex composed of ANKS4B, MYO7B, USH1C, CDHR2 and CDHR5. Interacts with USH1C; the interaction is direct and is required for ANKS4B localization to the tip of microvilli. Interacts with MYO7B; the interaction is direct. May interact with HSPA5. In terms of tissue distribution, cochlea, kidney, lung, liver, pancreas, salivary gland and small intestine (at protein level). Expressed in kidney, small intestine, pancreas, liver and colon. Not detected in heart, spleen and brain.

It is found in the cell projection. The protein resides in the microvillus. As part of the intermicrovillar adhesion complex/IMAC plays a role in epithelial brush border differentiation, controlling microvilli organization and length. Plays a role in assembly of the complex. May play a role in cellular response to endoplasmic reticulum stress. The chain is Ankyrin repeat and SAM domain-containing protein 4B from Mus musculus (Mouse).